Consider the following 101-residue polypeptide: MNKSKRPFTKSKRSFRRRLPPIQSGDRIDYRNMSLISRFISEQGKILSRRVNRVTLKQQRLITIAIKQARILSLLPFLTNQKQFERSESTPRTTSLRTRKK.

A compositionally biased stretch (basic residues) spans 1–19 (MNKSKRPFTKSKRSFRRRL). Residues 1–23 (MNKSKRPFTKSKRSFRRRLPPIQ) form a disordered region.

This sequence belongs to the bacterial ribosomal protein bS18 family. As to quaternary structure, part of the 30S ribosomal subunit.

It localises to the plastid. Its subcellular location is the chloroplast. This chain is Small ribosomal subunit protein bS18c, found in Lobularia maritima (Sweet alyssum).